A 428-amino-acid polypeptide reads, in one-letter code: Histidine--tRNA ligase (428 aa).

This sequence belongs to the class-II aminoacyl-tRNA synthetase family. As to quaternary structure, homodimer.

Its subcellular location is the cytoplasm. The enzyme catalyses tRNA(His) + L-histidine + ATP = L-histidyl-tRNA(His) + AMP + diphosphate + H(+). The polypeptide is Histidine--tRNA ligase (Bordetella avium (strain 197N)).